We begin with the raw amino-acid sequence, 225 residues long: NAD(P)H-quinone oxidoreductase subunit K, chloroplastic (225 aa).

[4Fe-4S] cluster contacts are provided by Cys-43, Cys-44, Cys-108, and Cys-139.

Belongs to the complex I 20 kDa subunit family. NDH is composed of at least 16 different subunits, 5 of which are encoded in the nucleus. Requires [4Fe-4S] cluster as cofactor.

The protein localises to the plastid. The protein resides in the chloroplast thylakoid membrane. It catalyses the reaction a plastoquinone + NADH + (n+1) H(+)(in) = a plastoquinol + NAD(+) + n H(+)(out). The catalysed reaction is a plastoquinone + NADPH + (n+1) H(+)(in) = a plastoquinol + NADP(+) + n H(+)(out). In terms of biological role, NDH shuttles electrons from NAD(P)H:plastoquinone, via FMN and iron-sulfur (Fe-S) centers, to quinones in the photosynthetic chain and possibly in a chloroplast respiratory chain. The immediate electron acceptor for the enzyme in this species is believed to be plastoquinone. Couples the redox reaction to proton translocation, and thus conserves the redox energy in a proton gradient. The polypeptide is NAD(P)H-quinone oxidoreductase subunit K, chloroplastic (Oenothera argillicola (Appalachian evening primrose)).